A 631-amino-acid polypeptide reads, in one-letter code: tRNA uridine 5-carboxymethylaminomethyl modification enzyme MnmG (631 aa).

FAD is bound by residues 13 to 18 (GGGHAG), Val-125, and Ser-180. 273-287 (GPRYCPSIEDKVMRF) serves as a coordination point for NAD(+). Residue Gln-370 coordinates FAD.

Belongs to the MnmG family. In terms of assembly, homodimer. Heterotetramer of two MnmE and two MnmG subunits. The cofactor is FAD.

The protein localises to the cytoplasm. NAD-binding protein involved in the addition of a carboxymethylaminomethyl (cmnm) group at the wobble position (U34) of certain tRNAs, forming tRNA-cmnm(5)s(2)U34. In Vibrio parahaemolyticus serotype O3:K6 (strain RIMD 2210633), this protein is tRNA uridine 5-carboxymethylaminomethyl modification enzyme MnmG.